The following is a 432-amino-acid chain: Adenylosuccinate synthetase (432 aa).

GTP contacts are provided by residues 12 to 18 (GDEGKGK) and 40 to 42 (GHT). Asp13 serves as the catalytic Proton acceptor. The Mg(2+) site is built by Asp13 and Gly40. IMP-binding positions include 13–16 (DEGK), 38–41 (NAGH), Thr133, Arg147, Gln228, Thr243, and Arg307. The Proton donor role is filled by His41. Substrate is bound at residue 303–309 (TTTGRPR). GTP-binding positions include Arg309, 335 to 337 (KLD), and 417 to 419 (GVG).

Belongs to the adenylosuccinate synthetase family. Homodimer. Mg(2+) is required as a cofactor.

It is found in the cytoplasm. The enzyme catalyses IMP + L-aspartate + GTP = N(6)-(1,2-dicarboxyethyl)-AMP + GDP + phosphate + 2 H(+). Its pathway is purine metabolism; AMP biosynthesis via de novo pathway; AMP from IMP: step 1/2. Plays an important role in the de novo pathway of purine nucleotide biosynthesis. Catalyzes the first committed step in the biosynthesis of AMP from IMP. In Nocardioides sp. (strain ATCC BAA-499 / JS614), this protein is Adenylosuccinate synthetase.